The following is a 384-amino-acid chain: 8-amino-7-oxononanoate synthase (384 aa).

Position 21 (Arg21) interacts with substrate. Gly108–Phe109 is a pyridoxal 5'-phosphate binding site. Residue His133 coordinates substrate. The pyridoxal 5'-phosphate site is built by Ser179, His207, and Thr233. Lys236 bears the N6-(pyridoxal phosphate)lysine mark. Thr352 is a binding site for substrate.

The protein belongs to the class-II pyridoxal-phosphate-dependent aminotransferase family. BioF subfamily. Homodimer. Requires pyridoxal 5'-phosphate as cofactor.

The catalysed reaction is 6-carboxyhexanoyl-[ACP] + L-alanine + H(+) = (8S)-8-amino-7-oxononanoate + holo-[ACP] + CO2. Its pathway is cofactor biosynthesis; biotin biosynthesis. In terms of biological role, catalyzes the decarboxylative condensation of pimeloyl-[acyl-carrier protein] and L-alanine to produce 8-amino-7-oxononanoate (AON), [acyl-carrier protein], and carbon dioxide. In Enterobacter sp. (strain 638), this protein is 8-amino-7-oxononanoate synthase.